Consider the following 206-residue polypeptide: MEMDASGASRAPISVLPAAEVKSTLKPEADKPRCSSTPCSPIKSTVSGYQILHMNSNYLVGFTTGEELLKLAQKWSSPDSSNTEALPSPIKKPVDLGLHRASRIYKAKSRYYQPYDIPAVNGRRRRRMPSSGDSCLKSIVSGEPSKALHGPLPLCLLKGKRVYSKSLDYLNLDKMSLREPVDTEVLQYQLQHLNLRGERVFTRNKT.

It belongs to the UNC119-binding protein family. In terms of assembly, interacts with unc119 family proteins; interaction preferentially takes place when unc119 proteins are unliganded with myristoylated proteins.

Its subcellular location is the cytoplasm. The protein resides in the cell projection. It is found in the cilium. Its function is as follows. May play a role in immune regulation through regulation of the macrophage function. Involved in the recruitment of macrophages in response to injury. May also play a role in trafficking of proteins via its interaction with unc119 family cargo adapters. May play a role in ciliary membrane localization. In terms of biological role, regulates the macrophage function, by enhancing the resolution of inflammation and wound repair functions mediated by M2 macrophages. The regulation of macrophage function is, due at least in part, to the role of C5orf30 in regulating ability to inhibit glycolysis. Probably plays alaso a role in trafficking of proteins via its interaction with UNC119 and UNC119B cargo adapters: may help the release of UNC119 and UNC119B cargo or the recycling of UNC119 and UNC119B. May play a role in ciliary membrane localization via its interaction with UNC119B and protein transport into photoreceptor cells. The protein is Macrophage immunometabolism regulator (macir) of Danio rerio (Zebrafish).